Consider the following 622-residue polypeptide: uncharacterized protein (622 aa).

The span at 157-166 (LKESPLRDQQ) shows a compositional bias: basic and acidic residues. The interval 157 to 238 (LKESPLRDQQ…GLPDHNSISE (82 aa)) is disordered.

This is an uncharacterized protein from Homo sapiens (Human).